The chain runs to 269 residues: MPGVETIKSSWADEVELDYGGLPPTTETVENGQKYVTEYKYNKDDKKTKVVRTYKISKQVVPKTVAKRRTWTKFGESKNDKPGPNSQTTMVSEEIFMQFLNSKEDEKANDPLLDPTKNIAKCRICNGEHWSVNCPYKGTAMDTNMMEKKASAAAAAAVDAPKSGKYVPPFLKDSQKGALGMRGRDDTAAIRISNLSESMTEADLEELVKKIGPQSKMYLARDKNTGLCKGFAYVHFKQRKDAAAAIEILNGHGYDHLILSVEWSKPQNN.

The RRM domain maps to 188-266; sequence AAIRISNLSE…LILSVEWSKP (79 aa).

Belongs to the eIF-3 subunit G family. Component of the eukaryotic translation initiation factor 3 (eIF-3) complex. The eIF-3 complex interacts with pix.

The protein localises to the cytoplasm. In terms of biological role, RNA-binding component of the eukaryotic translation initiation factor 3 (eIF-3) complex, which is involved in protein synthesis of a specialized repertoire of mRNAs and, together with other initiation factors, stimulates binding of mRNA and methionyl-tRNAi to the 40S ribosome. The eIF-3 complex specifically targets and initiates translation of a subset of mRNAs involved in cell proliferation. This subunit can bind 18S rRNA. This Drosophila sechellia (Fruit fly) protein is Eukaryotic translation initiation factor 3 subunit G-1.